The chain runs to 130 residues: MARVTVEDCIDKVDNRFDLVLLAAHRARMISSGSQLTIDRDNDKNPVVSLREIAEQTISPEDMREELVHSLQKFVEVDEPEPDTVPLIGSAGASVDADDTEVAVERMTEEELLKGLEGLAPREEQPEEDE.

2 disordered regions span residues 80–99 and 110–130; these read PEPDTVPLIGSAGASVDADD and EELLKGLEGLAPREEQPEEDE. Positions 110-124 are enriched in basic and acidic residues; that stretch reads EELLKGLEGLAPREE.

Belongs to the RNA polymerase subunit omega family. As to quaternary structure, the RNAP catalytic core consists of 2 alpha, 1 beta, 1 beta' and 1 omega subunit. When a sigma factor is associated with the core the holoenzyme is formed, which can initiate transcription.

It carries out the reaction RNA(n) + a ribonucleoside 5'-triphosphate = RNA(n+1) + diphosphate. In terms of biological role, promotes RNA polymerase assembly. Latches the N- and C-terminal regions of the beta' subunit thereby facilitating its interaction with the beta and alpha subunits. This chain is DNA-directed RNA polymerase subunit omega, found in Nitrobacter hamburgensis (strain DSM 10229 / NCIMB 13809 / X14).